A 427-amino-acid chain; its full sequence is MSKGLPARQDMEKERETLQAWKERVGQELDRVVAFWMEHSHDQEHGGFFTCLGREGRVYDDLKYVWLQGRQVWMYCRLYRTFERFRHAQLLDAAKAGGEFLLRYARVAPPGKKCAFVLTRDGRPVKVQRTIFSECFYTMAMNELWRATGEVRYQTEAVEMMDQIVHWVQEDASGLGRPQLQGAPAAEPMAVPMMLLNLVEQLGEADEELAGKYAELGDWCARRILQHVQRDGQAVLENVSEGGKELPGCLGRQQNPGHTLEAGWFLLRHCIRKGDPELRAHVIDKFLLLPFHSGWDPDHGGLFYFQDADNFCPTQLEWAMKLWWPHSEAMIAFLMGYSDSGDPVLLRLFYQVAEYTFRQFRDPEYGEWFGYLSREGKVALSIKGGPFKGCFHVPRCLAMCEEMLGALLSRPAPAPSPAPTPACRGAE.

Residues 195–216 are leucine-zipper; that stretch reads LLNLVEQLGEADEELAGKYAEL.

This sequence belongs to the N-acylglucosamine 2-epimerase family. In terms of assembly, homodimer. Forms a heterodimer with renin and inhibits its activity.

It carries out the reaction an N-acyl-D-glucosamine = an N-acyl-D-mannosamine. Its pathway is amino-sugar metabolism; N-acetylneuraminate degradation. Inhibited by N-ethylmaleimide, 5,5'-dithiobis-2-nitrobenzoate and iodoacetic acid. Functionally, catalyzes the interconversion of N-acetylglucosamine to N-acetylmannosamine. Involved in the N-glycolylneuraminic acid (Neu5Gc) degradation pathway: although human is not able to catalyze formation of Neu5Gc due to the inactive CMAHP enzyme, Neu5Gc is present in food and must be degraded. This chain is N-acylglucosamine 2-epimerase (RENBP), found in Homo sapiens (Human).